A 219-amino-acid polypeptide reads, in one-letter code: Protein RhiB (219 aa).

Residues 174 to 195 show a composition bias toward polar residues; it reads AGISQQGNAAGTSISSKSTGSP. The segment at 174 to 201 is disordered; it reads AGISQQGNAAGTSISSKSTGSPENPART.

Functionally, may be involved in plant-microbe interaction. This chain is Protein RhiB (rhiB), found in Rhizobium leguminosarum bv. viciae.